We begin with the raw amino-acid sequence, 532 residues long: Mitogen-activated protein kinase kinase mkk1 (532 aa).

One can recognise a Protein kinase domain in the interval 235-505 (IVELGGLGEG…PWKMLEHPWM (271 aa)). ATP contacts are provided by residues 241 to 249 (LGEGAGGAV) and K264. D362 (proton acceptor) is an active-site residue.

Belongs to the protein kinase superfamily. STE Ser/Thr protein kinase family. MAP kinase kinase subfamily.

The enzyme catalyses L-seryl-[protein] + ATP = O-phospho-L-seryl-[protein] + ADP + H(+). It catalyses the reaction L-threonyl-[protein] + ATP = O-phospho-L-threonyl-[protein] + ADP + H(+). Its function is as follows. Mitogen-activated protein kinase kinase, part of the mkh1-mkk1-spm1 MAPK cascade that regulates regulates vegetative growth, conidial formation, colony surface hydrophobicity, osmotic stress, cell wall integrity maintenance, carbon and nitrogen source utilization, chitin distribution, septa formation, and pathogenicity. This chain is Mitogen-activated protein kinase kinase mkk1, found in Cytospora mali (Apple Valsa canker fungus).